A 394-amino-acid chain; its full sequence is Putative FNIP repeat-containing protein R636 (394 aa).

FNIP repeat units lie at residues 126–167 (FNKS…FSVY), 168–207 (FDQP…LYFG), and 210–250 (FNQP…IFEA).

The protein is Putative FNIP repeat-containing protein R636 of Acanthamoeba polyphaga mimivirus (APMV).